Reading from the N-terminus, the 137-residue chain is Histone H2B.1, sperm (137 aa).

Residues 1–43 form a disordered region; that stretch reads MPSQKSPTKRSPTKRSPQKGGKGAKRGGKAGKRRRGVAVKRRR. 3 consecutive short sequence motifs (SPKK motif) follow at residues 6–9, 11–14, and 16–19; these read SPTK and SPQK. Over residues 7-43 the composition is skewed to basic residues; sequence PTKRSPTKRSPQKGGKGAKRGGKAGKRRRGVAVKRRR. S11 and S16 each carry phosphoserine. A glycan (O-linked (GlcNAc) serine) is linked at S124. Residue K132 forms a Glycyl lysine isopeptide (Lys-Gly) (interchain with G-Cter in ubiquitin) linkage.

Belongs to the histone H2B family. The nucleosome is a histone octamer containing two molecules each of H2A, H2B, H3 and H4 assembled in one H3-H4 heterotetramer and two H2A-H2B heterodimers. The octamer wraps approximately 147 bp of DNA. Post-translationally, monoubiquitination of Lys-132 gives a specific tag for epigenetic transcriptional activation and is also prerequisite for histone H3 'Lys-4' and 'Lys-79' methylation. In terms of processing, phosphorylated on SPKK motifs 2 and 3; which may regulate DNA binding. Dephosphorylated during maturation of spermatids to mature sperm and rephosphorylated at fertilization. GlcNAcylation at Ser-124 promotes monoubiquitination of Lys-132. It fluctuates in response to extracellular glucose, and associates with transcribed genes.

The protein resides in the nucleus. Its subcellular location is the chromosome. Functionally, core component of nucleosome. Nucleosomes wrap and compact DNA into chromatin, limiting DNA accessibility to the cellular machineries which require DNA as a template. Histones thereby play a central role in transcription regulation, DNA repair, DNA replication and chromosomal stability. DNA accessibility is regulated via a complex set of post-translational modifications of histones, also called histone code, and nucleosome remodeling. The sequence is that of Histone H2B.1, sperm from Psammechinus miliaris (Green sea urchin).